A 21-amino-acid polypeptide reads, in one-letter code: Chlorophyllase type 2 (21 aa).

The protein belongs to the AB hydrolase superfamily. Lipase family.

The catalysed reaction is a chlorophyll + H2O = a chlorophyllide + phytol + H(+). The protein operates within porphyrin-containing compound metabolism; chlorophyll degradation. In terms of biological role, catalyzes the hydrolysis of ester bond in chlorophyll to yield chlorophyllide and phytol. The chain is Chlorophyllase type 2 from Chenopodium album (Fat hen).